Here is a 299-residue protein sequence, read N- to C-terminus: Phosphatidylcholine-sterol acyltransferase (299 aa).

N-linked (GlcNAc...) asparagine glycans are attached at residues Asn-28 and Asn-184. Cys-225 and Cys-268 are oxidised to a cystine. Asp-257 functions as the Charge relay system in the catalytic mechanism. Asn-285 carries an N-linked (GlcNAc...) asparagine glycan. His-289 acts as the Charge relay system in catalysis. A glycan (N-linked (GlcNAc...) asparagine) is linked at Asn-296.

The protein belongs to the AB hydrolase superfamily. Lipase family.

The protein localises to the secreted. The enzyme catalyses a sterol + a 1,2-diacyl-sn-glycero-3-phosphocholine = a sterol ester + a 1-acyl-sn-glycero-3-phosphocholine. Its activity is regulated as follows. APOA1 is the most potent activator in plasma. Also activated by APOE, APOC1 and APOA4. In terms of biological role, central enzyme in the extracellular metabolism of plasma lipoproteins. Synthesized mainly in the liver and secreted into plasma where it converts cholesterol and phosphatidylcholines (lecithins) to cholesteryl esters and lysophosphatidylcholines on the surface of high and low density lipoproteins (HDLs and LDLs). The cholesterol ester is then transported back to the liver. Has a preference for plasma 16:0-18:2 or 18:O-18:2 phosphatidylcholines. Also produced in the brain by primary astrocytes, and esterifies free cholesterol on nascent APOE-containing lipoproteins secreted from glia and influences cerebral spinal fluid (CSF) APOE- and APOA1 levels. Together with APOE and the cholesterol transporter ABCA1, plays a key role in the maturation of glial-derived, nascent lipoproteins. Required for remodeling high-density lipoprotein particles into their spherical forms. The protein is Phosphatidylcholine-sterol acyltransferase (LCAT) of Micromys minutus (European harvest mouse).